The following is a 450-amino-acid chain: Probable helicase D10 (450 aa).

Residues 95-240 enclose the Helicase ATP-binding domain; that stretch reads PIYEECDDTC…MFKDFFGYKI (146 aa). An ATP-binding site is contributed by 108–115; sequence GKPGFGKT. The short motif at 193-196 is the DEAH box element; it reads DEVH. Residues 289–439 form the Helicase C-terminal domain; the sequence is NLAHLYVNMG…TITMTPEKAV (151 aa).

It carries out the reaction ATP + H2O = ADP + phosphate + H(+). The protein is Probable helicase D10 (D10) of Escherichia phage T5 (Enterobacteria phage T5).